The sequence spans 424 residues: Poly-cysteine and histidine-tailed protein (424 aa).

Residues methionine 1–glycine 17 form the signal peptide. The N-linked (GlcNAc...) asparagine glycan is linked to asparagine 291. The span at valine 372–asparagine 390 shows a compositional bias: basic and acidic residues. Positions valine 372 to histidine 424 are disordered. Asparagine 397 carries an N-linked (GlcNAc...) asparagine glycan.

Glycosylated. As to expression, expressed in larval tissues like cuticle, hypodermis and muscle (at protein level). Note=Not excreted into striated muscle fibers or nurse cell.

The protein resides in the secreted. Its function is as follows. Binds iron and zinc. May bind nickel. The sequence is that of Poly-cysteine and histidine-tailed protein from Trichinella spiralis (Trichina worm).